A 316-amino-acid chain; its full sequence is tRNA-splicing endonuclease subunit Sen34 (316 aa).

The tract at residues 120–184 (QAAKKQKLEQ…PGPSNGVTPL (65 aa)) is disordered. Polar residues-rich tracts occupy residues 144 to 159 (EATQGSETSDDGQPSA) and 168 to 181 (LDSSSPQPGPSNGV). Catalysis depends on residues Tyr253, His261, and Lys292.

Belongs to the tRNA-intron endonuclease family. In terms of assembly, tRNA splicing endonuclease is a heterotetramer composed of TSEN2, TSEN15, TSEN34/LENG5 and TSEN54. tRNA splicing endonuclease complex also contains proteins of the pre-mRNA 3'-end processing machinery such as CLP1, CPSF1, CPSF4 and CSTF2.

The protein localises to the nucleus. It localises to the nucleolus. The catalysed reaction is pretRNA = a 3'-half-tRNA molecule with a 5'-OH end + a 5'-half-tRNA molecule with a 2',3'-cyclic phosphate end + an intron with a 2',3'-cyclic phosphate and a 5'-hydroxyl terminus.. In terms of biological role, constitutes one of the two catalytic subunit of the tRNA-splicing endonuclease complex, a complex responsible for identification and cleavage of the splice sites in pre-tRNA. It cleaves pre-tRNA at the 5'- and 3'-splice sites to release the intron. The products are an intron and two tRNA half-molecules bearing 2',3'-cyclic phosphate and 5'-OH termini. There are no conserved sequences at the splice sites, but the intron is invariably located at the same site in the gene, placing the splice sites an invariant distance from the constant structural features of the tRNA body. The tRNA splicing endonuclease is also involved in mRNA processing via its association with pre-mRNA 3'-end processing factors, establishing a link between pre-tRNA splicing and pre-mRNA 3'-end formation, suggesting that the endonuclease subunits function in multiple RNA-processing events. The polypeptide is tRNA-splicing endonuclease subunit Sen34 (Tsen34) (Mus musculus (Mouse)).